A 176-amino-acid polypeptide reads, in one-letter code: ATP synthase subunit delta (176 aa).

Belongs to the ATPase delta chain family. As to quaternary structure, F-type ATPases have 2 components, F(1) - the catalytic core - and F(0) - the membrane proton channel. F(1) has five subunits: alpha(3), beta(3), gamma(1), delta(1), epsilon(1). F(0) has three main subunits: a(1), b(2) and c(10-14). The alpha and beta chains form an alternating ring which encloses part of the gamma chain. F(1) is attached to F(0) by a central stalk formed by the gamma and epsilon chains, while a peripheral stalk is formed by the delta and b chains.

Its subcellular location is the cell inner membrane. Its function is as follows. F(1)F(0) ATP synthase produces ATP from ADP in the presence of a proton or sodium gradient. F-type ATPases consist of two structural domains, F(1) containing the extramembraneous catalytic core and F(0) containing the membrane proton channel, linked together by a central stalk and a peripheral stalk. During catalysis, ATP synthesis in the catalytic domain of F(1) is coupled via a rotary mechanism of the central stalk subunits to proton translocation. In terms of biological role, this protein is part of the stalk that links CF(0) to CF(1). It either transmits conformational changes from CF(0) to CF(1) or is implicated in proton conduction. This chain is ATP synthase subunit delta, found in Aliarcobacter butzleri (strain RM4018) (Arcobacter butzleri).